A 542-amino-acid polypeptide reads, in one-letter code: Putative CTP synthase (542 aa).

An amidoligase domain region spans residues 1-277; sequence MEIDLMKHIQ…HKTILDFFSL (277 aa). Ser23 serves as a coordination point for CTP. Residue Ser23 coordinates UTP. ATP-binding positions include 24-29 and Asp81; that span reads SLGKGV. Residues Asp81 and Glu151 each contribute to the Mg(2+) site. CTP contacts are provided by residues 158 to 160, 198 to 203, and Lys234; these read DIE and KTKPTQ. UTP is bound by residues 198–203 and Lys234; that span reads KTKPTQ. The Glutamine amidotransferase type-1 domain maps to 310 to 542; that stretch reads YVELPDAYKS…LKMSLKIKES (233 aa). The active site involves Glu517.

Belongs to the CTP synthase family. As to quaternary structure, homotetramer.

The catalysed reaction is UTP + L-glutamine + ATP + H2O = CTP + L-glutamate + ADP + phosphate + 2 H(+). It catalyses the reaction L-glutamine + H2O = L-glutamate + NH4(+). It carries out the reaction UTP + NH4(+) + ATP = CTP + ADP + phosphate + 2 H(+). It participates in pyrimidine metabolism; CTP biosynthesis via de novo pathway; CTP from UDP: step 2/2. With respect to regulation, allosterically activated by GTP, when glutamine is the substrate; GTP has no effect on the reaction when ammonia is the substrate. The allosteric effector GTP functions by stabilizing the protein conformation that binds the tetrahedral intermediate(s) formed during glutamine hydrolysis. Inhibited by the product CTP, via allosteric rather than competitive inhibition. Catalyzes the ATP-dependent amination of UTP to CTP with either L-glutamine or ammonia as the source of nitrogen. Regulates intracellular CTP levels through interactions with the four ribonucleotide triphosphates. This chain is Putative CTP synthase, found in Ureaplasma parvum serovar 3 (strain ATCC 700970).